A 394-amino-acid chain; its full sequence is uncharacterized protein (394 aa).

The next 8 helical transmembrane spans lie at 22-42 (VLVSLFGVSLLLLCLAGVLLH), 60-80 (LALFDLHGLIGIWGLPWLLLF), 81-101 (GFTGALSGLGALGTLLLAPVA), 231-251 (LHLAMGLGACLLCASGLYLWL), 271-291 (GFCAGLVAAAALLLLGLQLAP), 303-323 (LFLVLWAAAGLAALLLPGDWP), 328-348 (LLGVAGLACLAAAVAHLAPWL), and 355-375 (ALGPDLTLILCGALLIRHAWM).

Its subcellular location is the cell membrane. This is an uncharacterized protein from Pseudomonas aeruginosa (strain ATCC 15692 / DSM 22644 / CIP 104116 / JCM 14847 / LMG 12228 / 1C / PRS 101 / PAO1).